Here is a 314-residue protein sequence, read N- to C-terminus: D-alanine--D-alanine ligase (314 aa).

Residues lysine 112–aspartate 307 form the ATP-grasp domain. Residue alanine 138–threonine 193 coordinates ATP. Mg(2+) contacts are provided by aspartate 261, glutamate 274, and asparagine 276.

This sequence belongs to the D-alanine--D-alanine ligase family. Mg(2+) serves as cofactor. Mn(2+) is required as a cofactor.

The protein resides in the cytoplasm. It catalyses the reaction 2 D-alanine + ATP = D-alanyl-D-alanine + ADP + phosphate + H(+). It participates in cell wall biogenesis; peptidoglycan biosynthesis. Its function is as follows. Cell wall formation. This Stutzerimonas stutzeri (strain A1501) (Pseudomonas stutzeri) protein is D-alanine--D-alanine ligase.